Consider the following 408-residue polypeptide: Phosphoglycerate kinase (408 aa).

Substrate contacts are provided by residues 28-30 (DIN), Arg43, 66-69 (HQGR), Arg123, and Arg163. Residues Glu334 and 358–361 (GGHT) contribute to the ATP site.

Belongs to the phosphoglycerate kinase family. As to quaternary structure, monomer.

The protein localises to the cytoplasm. The catalysed reaction is (2R)-3-phosphoglycerate + ATP = (2R)-3-phospho-glyceroyl phosphate + ADP. The protein operates within carbohydrate degradation; glycolysis; pyruvate from D-glyceraldehyde 3-phosphate: step 2/5. This Pyrobaculum aerophilum (strain ATCC 51768 / DSM 7523 / JCM 9630 / CIP 104966 / NBRC 100827 / IM2) protein is Phosphoglycerate kinase.